Reading from the N-terminus, the 150-residue chain is Cytochrome c-type biogenesis protein CcmE (150 aa).

The Cytoplasmic segment spans residues M1–R7. Residues L8–A28 traverse the membrane as a helical; Signal-anchor for type II membrane protein segment. Over F29–R150 the chain is Periplasmic. The heme site is built by H123 and Y127.

The protein belongs to the CcmE/CycJ family.

It is found in the cell inner membrane. Its function is as follows. Heme chaperone required for the biogenesis of c-type cytochromes. Transiently binds heme delivered by CcmC and transfers the heme to apo-cytochromes in a process facilitated by CcmF and CcmH. The chain is Cytochrome c-type biogenesis protein CcmE from Rhizobium meliloti (strain 1021) (Ensifer meliloti).